Here is a 457-residue protein sequence, read N- to C-terminus: Bifunctional protein GlmU (457 aa).

The segment at 1–230 (MSKRYAVVLA…FEESLGVNDR (230 aa)) is pyrophosphorylase. Residues 9-12 (LAAG), Lys-23, Gln-73, and 78-79 (GT) contribute to the UDP-N-acetyl-alpha-D-glucosamine site. Position 103 (Asp-103) interacts with Mg(2+). UDP-N-acetyl-alpha-D-glucosamine contacts are provided by Gly-140, Glu-155, Asn-170, and Asn-228. Asn-228 is a binding site for Mg(2+). The linker stretch occupies residues 231–251 (IALAEASKLMQRRINDNHMRN). An N-acetyltransferase region spans residues 252-457 (GVTLVNPENT…DYAKRLNHGK (206 aa)). Arg-333 and Lys-351 together coordinate UDP-N-acetyl-alpha-D-glucosamine. The active-site Proton acceptor is the His-363. Residues Tyr-366 and Asn-377 each contribute to the UDP-N-acetyl-alpha-D-glucosamine site. Residues 386-387 (NY), Ala-423, and Arg-440 contribute to the acetyl-CoA site.

The protein in the N-terminal section; belongs to the N-acetylglucosamine-1-phosphate uridyltransferase family. In the C-terminal section; belongs to the transferase hexapeptide repeat family. As to quaternary structure, homotrimer. Requires Mg(2+) as cofactor.

The protein resides in the cytoplasm. The catalysed reaction is alpha-D-glucosamine 1-phosphate + acetyl-CoA = N-acetyl-alpha-D-glucosamine 1-phosphate + CoA + H(+). It carries out the reaction N-acetyl-alpha-D-glucosamine 1-phosphate + UTP + H(+) = UDP-N-acetyl-alpha-D-glucosamine + diphosphate. It functions in the pathway nucleotide-sugar biosynthesis; UDP-N-acetyl-alpha-D-glucosamine biosynthesis; N-acetyl-alpha-D-glucosamine 1-phosphate from alpha-D-glucosamine 6-phosphate (route II): step 2/2. Its pathway is nucleotide-sugar biosynthesis; UDP-N-acetyl-alpha-D-glucosamine biosynthesis; UDP-N-acetyl-alpha-D-glucosamine from N-acetyl-alpha-D-glucosamine 1-phosphate: step 1/1. The protein operates within bacterial outer membrane biogenesis; LPS lipid A biosynthesis. Its function is as follows. Catalyzes the last two sequential reactions in the de novo biosynthetic pathway for UDP-N-acetylglucosamine (UDP-GlcNAc). The C-terminal domain catalyzes the transfer of acetyl group from acetyl coenzyme A to glucosamine-1-phosphate (GlcN-1-P) to produce N-acetylglucosamine-1-phosphate (GlcNAc-1-P), which is converted into UDP-GlcNAc by the transfer of uridine 5-monophosphate (from uridine 5-triphosphate), a reaction catalyzed by the N-terminal domain. The protein is Bifunctional protein GlmU of Listeria welshimeri serovar 6b (strain ATCC 35897 / DSM 20650 / CCUG 15529 / CIP 8149 / NCTC 11857 / SLCC 5334 / V8).